The following is a 572-amino-acid chain: Phosphoenolpyruvate-protein phosphotransferase (572 aa).

Histidine 190 (tele-phosphohistidine intermediate) is an active-site residue. Phosphoenolpyruvate-binding residues include arginine 297 and arginine 333. Positions 432 and 456 each coordinate Mg(2+). Residues 455 to 456 (ND) and arginine 466 each bind phosphoenolpyruvate. Cysteine 503 acts as the Proton donor in catalysis.

It belongs to the PEP-utilizing enzyme family. As to quaternary structure, homodimer. Mg(2+) is required as a cofactor.

It is found in the cytoplasm. The catalysed reaction is L-histidyl-[protein] + phosphoenolpyruvate = N(pros)-phospho-L-histidyl-[protein] + pyruvate. Its function is as follows. General (non sugar-specific) component of the phosphoenolpyruvate-dependent sugar phosphotransferase system (sugar PTS). This major carbohydrate active-transport system catalyzes the phosphorylation of incoming sugar substrates concomitantly with their translocation across the cell membrane. Enzyme I transfers the phosphoryl group from phosphoenolpyruvate (PEP) to the phosphoryl carrier protein (HPr). The protein is Phosphoenolpyruvate-protein phosphotransferase (ptsI) of Listeria monocytogenes serovar 1/2a (strain ATCC BAA-679 / EGD-e).